Consider the following 82-residue polypeptide: Small ribosomal subunit protein bTHXm (82 aa).

A mitochondrion-targeting transit peptide spans M1 to V22. The disordered stretch occupies residues R34–R56. Positions K37–K46 are enriched in basic residues.

This sequence belongs to the bacterial ribosomal protein bTHX family.

It is found in the mitochondrion. The protein is Small ribosomal subunit protein bTHXm of Oryza sativa subsp. japonica (Rice).